The sequence spans 151 residues: MHSLQAKILDPRLGTDFPLPQYATPGSAGLDLRAMLEEDTVLGPGQTLLIPTGLSIHIADPGLAALVLPRSGLGHKHGIVLGNLVGLIDSDYQGELMVSCWNRGESPFTIAVGERIAQLVLVPVVQAHFELVEQFDESQRGAGGFGHSGSH.

Substrate contacts are provided by residues R70–G72, N83, L87–D89, and M97.

This sequence belongs to the dUTPase family. Mg(2+) serves as cofactor.

The enzyme catalyses dUTP + H2O = dUMP + diphosphate + H(+). It participates in pyrimidine metabolism; dUMP biosynthesis; dUMP from dCTP (dUTP route): step 2/2. This enzyme is involved in nucleotide metabolism: it produces dUMP, the immediate precursor of thymidine nucleotides and it decreases the intracellular concentration of dUTP so that uracil cannot be incorporated into DNA. The chain is Deoxyuridine 5'-triphosphate nucleotidohydrolase from Pseudomonas paraeruginosa (strain DSM 24068 / PA7) (Pseudomonas aeruginosa (strain PA7)).